The sequence spans 234 residues: uncharacterized protein (234 aa).

This is an uncharacterized protein from Methanocaldococcus jannaschii (strain ATCC 43067 / DSM 2661 / JAL-1 / JCM 10045 / NBRC 100440) (Methanococcus jannaschii).